We begin with the raw amino-acid sequence, 710 residues long: Solute carrier organic anion transporter family member 3A1 (710 aa).

An N-acetylmethionine modification is found at Met1. The tract at residues 1-25 (MQAKKPGGSSGGGRSGELQGDEAQR) is disordered. Residues 1-40 (MQAKKPGGSSGGGRSGELQGDEAQRNKKKKKKVSCFSNIK) are Cytoplasmic-facing. Residues 41–60 (IFLVSECALMLAQGTVGAYL) form a helical membrane-spanning segment. Topologically, residues 61-79 (VSVLTTLERRFNLQSADVG) are extracellular. The helical transmembrane segment at 80–100 (VIASSFEIGNLALILFVSYFG) threads the bilayer. Topologically, residues 101–106 (ARGHRP) are cytoplasmic. Residues 107 to 131 (RLIGCGGIVMALGALLSALPEFLTH) traverse the membrane as a helical segment. The Extracellular segment spans residues 132–174 (QYKYEAGEIRWGAEGRDVCAANGSGGDQGPDPDLICRSRTATN). The N-linked (GlcNAc...) asparagine glycan is linked to Asn153. Residues 175–203 (MMYLLLIGAQVLLGIGATPVQPLGVSYID) form a helical membrane-spanning segment. Residues 204–222 (DHVRRKDSSLYIGILFTML) are Cytoplasmic-facing. The helical transmembrane segment at 223 to 243 (VFGPACGFILGSFCTKIYVDA) threads the bilayer. Topologically, residues 244–261 (VFIDTSNLDITPDDPRWI) are extracellular. The chain crosses the membrane as a helical span at residues 262 to 286 (GAWWGGFLLCGALLFFSSVLMFGFP). Residues 287–344 (QSLPPHSDPALESEQAMLPEREYERPKPSNGVLRHPLEPDSSASCFQQLRVIPKVTKH) lie on the Cytoplasmic side of the membrane. The chain crosses the membrane as a helical span at residues 345 to 366 (LLSNPVFTCIILAACMEIAVVA). Residues 367–386 (GFAAFLGKYLEQQFNLTTSS) lie on the Extracellular side of the membrane. Asn381 is a glycosylation site (N-linked (GlcNAc...) asparagine). Residues 387–410 (ANQLLGMTAIPCACLGIFLGGLLV) traverse the membrane as a helical segment. Topologically, residues 411-414 (KKLS) are cytoplasmic. A helical transmembrane segment spans residues 415-438 (LSALGAIRMAMLVNLVSTACYVSF). The Extracellular segment spans residues 439 to 539 (LFLGCDTGPV…PGCQEAFLTF (101 aa)). Asn457 carries an N-linked (GlcNAc...) asparagine glycan. Residues 465 to 513 (LDPYSSCNKNCECQTDSFTPVCGADGITYLSACFAGCNSTNLTGCACLM) form the Kazal-like domain. 3 disulfides stabilise this stretch: Cys471–Cys501, Cys477–Cys497, and Cys486–Cys511. Asn502, Asn505, and Asn519 each carry an N-linked (GlcNAc...) asparagine glycan. Residues 540–562 (LCVMCVCSMIGAMAQTPSVIILI) traverse the membrane as a helical segment. At 563 to 571 (RTVSPELKS) the chain is on the cytoplasmic side. A helical transmembrane segment spans residues 572–597 (YALGVLFLLLRLLGFIPPPLIFGAGI). Over 598–630 (DSTCLFWSTFCGEQGACALYDNVAYRYLYVSIA) the chain is Extracellular. A helical membrane pass occupies residues 631-648 (IALKSFAFLLYTTTWQCL). Topologically, residues 649–705 (RKNYKRYIKNHEGGLSTSEFFASTLTLDNLGRDPVPANQTHRTKFIYNLEDHEWCEN) are cytoplasmic.

Belongs to the organo anion transporter (TC 2.A.60) family.

The protein resides in the basolateral cell membrane. The protein localises to the apical cell membrane. It localises to the basal cell membrane. It catalyses the reaction L-thyroxine(out) = L-thyroxine(in). The catalysed reaction is prostaglandin E1(out) = prostaglandin E1(in). The enzyme catalyses prostaglandin E2(out) = prostaglandin E2(in). It carries out the reaction prostaglandin F2alpha(out) = prostaglandin F2alpha(in). It catalyses the reaction (5Z,8Z,11Z,14Z)-eicosatetraenoate(out) = (5Z,8Z,11Z,14Z)-eicosatetraenoate(in). The catalysed reaction is taurocholate(out) = taurocholate(in). The enzyme catalyses glycocholate(out) = glycocholate(in). It carries out the reaction estrone 3-sulfate(out) = estrone 3-sulfate(in). It catalyses the reaction argipressin(out) = argipressin(in). In terms of biological role, putative organic anion antiporter with apparent broad substrate specificity. Recognizes various substrates including thyroid hormone L-thyroxine, prostanoids such as prostaglandin E1 and E2, bile acids such as taurocholate, glycolate and glycochenodeoxycholate and peptide hormones such as L-arginine vasopressin, likely operating in a tissue-specific manner. The transport mechanism, its electrogenicity and potential tissue-specific counterions remain to be elucidated. The protein is Solute carrier organic anion transporter family member 3A1 (SLCO3A1) of Bos taurus (Bovine).